Consider the following 241-residue polypeptide: MATVSMRDMLQAGVHFGHQTRYWNPKMKPFIFGARNKVHIINLEKTVPMFNEALAELSKISSRKGKILFVGTKRAASEAVKEHALSCDQFFVNHRWLGGMLTNWKTVRQSIKRLKDLEIQSQDGTFDKLTKKEALMRTRELSKLENSLGGIKDMGGLPDALFVVDADHEHIAIKEANNLGIPVFSIVDTNSDPDGVDFIIPGNDDAIRAVSLYLTAVAATVREGRSQDLAQQAEETFAEAE.

It belongs to the universal ribosomal protein uS2 family.

This chain is Small ribosomal subunit protein uS2, found in Erwinia tasmaniensis (strain DSM 17950 / CFBP 7177 / CIP 109463 / NCPPB 4357 / Et1/99).